The chain runs to 195 residues: uncharacterized protein (195 aa).

The signal sequence occupies residues 1–20; it reads MLKFRLILTVLTVLLITVNG. Residues 26–195 form a disordered region; that stretch reads IENKSSTSSS…LHNQYPPQQN (170 aa). Asparagine 28 carries an N-linked (GlcNAc...) asparagine glycan. Low complexity-rich tracts occupy residues 29 to 43 and 74 to 104; these read KSSTSSSKSAASKPS and QSKTAQAQPQPSAQSTNKPSFQNGQQSGGNQ. Polar residues-rich tracts occupy residues 112–123 and 151–176; these read DPYQTGSYQGPY and PKNTVQSGYQQPMPGQQSMQVPNNGP.

In terms of tissue distribution, component of the acid-soluble organic matrix of calcified layers of the shell (at protein level).

The protein localises to the secreted. This is an uncharacterized protein from Lottia gigantea (Giant owl limpet).